Here is a 227-residue protein sequence, read N- to C-terminus: Interleukin-6 (227 aa).

The N-terminal stretch at 1–22 (MASISYLLAPLVLAAVLQPTAG) is a signal peptide. The segment at 24-45 (PLDAPTESPAGETSGEEAETGS) is disordered. A disulfide bridge links C93 with C103.

It belongs to the IL-6 superfamily. In terms of assembly, component of a hexamer of two molecules each of IL6, IL6R and IL6ST; first binds to IL6R to associate with the signaling subunit IL6ST. As to expression, after induction, highly expressed in spleen. Can also be expressed in kidney after incubation with PHA.

The protein localises to the secreted. Cytokine with a wide variety of biological functions in immunity, tissue regeneration, and metabolism. Binds to IL6R, then the complex associates to the signaling subunit IL6ST/gp130 to trigger the intracellular IL6-signaling pathway. The interaction with the membrane-bound IL6R and IL6ST stimulates 'classic signaling', whereas the binding of IL6 and soluble IL6R to IL6ST stimulates 'trans-signaling'. Alternatively, 'cluster signaling' occurs when membrane-bound IL6:IL6R complexes on transmitter cells activate IL6ST receptors on neighboring receiver cells. The chain is Interleukin-6 (il6) from Takifugu rubripes (Japanese pufferfish).